The sequence spans 267 residues: Protein HesA, heterocyst (267 aa).

This sequence belongs to the HesA/MoeB/ThiF family.

This chain is Protein HesA, heterocyst (hesA1), found in Trichormus variabilis (strain ATCC 29413 / PCC 7937) (Anabaena variabilis).